The sequence spans 288 residues: 2-hydroxy-6-oxononadienedioate/2-hydroxy-6-oxononatrienedioate hydrolase (288 aa).

An AB hydrolase-1 domain is found at 39 to 274 (LVLLHGSGPG…RCGHWAQWEH (236 aa)). His268 acts as the Proton acceptor in catalysis.

It belongs to the AB hydrolase superfamily. MhpC family. In terms of assembly, homodimer.

The enzyme catalyses (2Z,4E)-2-hydroxy-6-oxonona-2,4-dienedioate + H2O = (2Z)-2-hydroxypenta-2,4-dienoate + succinate + H(+). It carries out the reaction (2Z,4E,7E)-2-hydroxy-6-oxonona-2,4,7-trienedioate + H2O = (2Z)-2-hydroxypenta-2,4-dienoate + fumarate + H(+). It participates in aromatic compound metabolism; 3-phenylpropanoate degradation. Its function is as follows. Catalyzes the cleavage of the C5-C6 bond of 2-hydroxy-6-oxononadienedioate and 2-hydroxy-6-oxononatrienedioate, a dienol ring fission product of the bacterial meta-cleavage pathway for degradation of phenylpropionic acid. The protein is 2-hydroxy-6-oxononadienedioate/2-hydroxy-6-oxononatrienedioate hydrolase of Paraburkholderia phymatum (strain DSM 17167 / CIP 108236 / LMG 21445 / STM815) (Burkholderia phymatum).